A 101-amino-acid polypeptide reads, in one-letter code: NADH-quinone oxidoreductase subunit K (101 aa).

Transmembrane regions (helical) follow at residues Leu-4–Leu-24, Ile-29–Ala-49, and Ile-61–Leu-81.

This sequence belongs to the complex I subunit 4L family. As to quaternary structure, NDH-1 is composed of 14 different subunits. Subunits NuoA, H, J, K, L, M, N constitute the membrane sector of the complex.

It is found in the cell inner membrane. It catalyses the reaction a quinone + NADH + 5 H(+)(in) = a quinol + NAD(+) + 4 H(+)(out). In terms of biological role, NDH-1 shuttles electrons from NADH, via FMN and iron-sulfur (Fe-S) centers, to quinones in the respiratory chain. The immediate electron acceptor for the enzyme in this species is believed to be ubiquinone. Couples the redox reaction to proton translocation (for every two electrons transferred, four hydrogen ions are translocated across the cytoplasmic membrane), and thus conserves the redox energy in a proton gradient. This is NADH-quinone oxidoreductase subunit K from Burkholderia vietnamiensis (strain G4 / LMG 22486) (Burkholderia cepacia (strain R1808)).